The primary structure comprises 378 residues: Cyclic di-GMP phosphodiesterase response regulator RpfG (378 aa).

The Response regulatory domain occupies 29–147 (NIVIVDDQMS…ELRARCSNLL (119 aa)). At D80 the chain carries 4-aspartylphosphate. Residues 174 to 371 (VEERERETLS…LEQICGQFST (198 aa)) form the HD-GYP domain.

As to quaternary structure, interacts with a subset of GGDEF domain-containing proteins. In terms of processing, phosphorylated and activated by RpfC.

Its subcellular location is the cytoplasm. The catalysed reaction is 3',3'-c-di-GMP + 2 H2O = 2 GMP + 2 H(+). Member of the two-component regulatory system RpfG/RpfC, which is involved in the perception and response to the diffusible signaling factor (DSF), which is essential for cell-cell signaling. Detection of DSF leads to the positive regulation of biofilm dispersal and the production of virulence factors. Activated RpfG degrades cyclic di-GMP to GMP, leading to the activation of Clp, a global transcriptional regulator that regulates a large set of genes in DSF pathway. May also directly control genes involved in biofilm dispersal. The chain is Cyclic di-GMP phosphodiesterase response regulator RpfG (rpfG) from Xanthomonas campestris pv. campestris (strain 8004).